We begin with the raw amino-acid sequence, 318 residues long: Taste receptor type 2 member 60 (318 aa).

Over 1–7 (MNGDHMV) the chain is Extracellular. Residues 8-28 (LGSSVTDKKAIILVTILLLLR) traverse the membrane as a helical segment. The Cytoplasmic portion of the chain corresponds to 29 to 40 (LVAIAGNGFITA). A helical transmembrane segment spans residues 41–61 (ALGVEWVLRRMLLPCDKLLVS). Residues 62-88 (LGASHFCLQSVVMGKTIYVFLYPMAFP) are Extracellular-facing. The chain crosses the membrane as a helical span at residues 89 to 109 (YNPVLQFLAFQWDFLNAATLW). Residues 110–128 (FSTWLSVFYCVKIATFTHP) are Cytoplasmic-facing. The helical transmembrane segment at 129-149 (VFFWLKHKLSGWLPWMVFSYV) threads the bilayer. Topologically, residues 150–183 (GLSSFTTILFFIGNHRMYQNYLKNHLQPWNVTGN) are extracellular. N-linked (GlcNAc...) asparagine glycosylation occurs at Asn179. Residues 184–204 (SIRSYCEKFYLFPLKMITWTM) form a helical membrane-spanning segment. Over 205–234 (PTAVFFICMILLITSLGRHMKKALLTTSGF) the chain is Cytoplasmic. A helical membrane pass occupies residues 235–255 (REPSVQAHIKALLALLSFAML). Residues 256-264 (FISYFLSLV) lie on the Extracellular side of the membrane. Residues 265-285 (FSAAGIFPPLDFKFWVWESVI) traverse the membrane as a helical segment. The Cytoplasmic portion of the chain corresponds to 286–318 (YLCAAVHPIILLFSNCRLRAVLKSRRSSRCGTP).

This sequence belongs to the G-protein coupled receptor T2R family.

The protein resides in the membrane. Receptor that may play a role in the perception of bitterness and is gustducin-linked. May play a role in sensing the chemical composition of the gastrointestinal content. The activity of this receptor may stimulate alpha gustducin, mediate PLC-beta-2 activation and lead to the gating of TRPM5. The polypeptide is Taste receptor type 2 member 60 (TAS2R60) (Pan troglodytes (Chimpanzee)).